Here is a 99-residue protein sequence, read N- to C-terminus: Aspartyl/glutamyl-tRNA(Asn/Gln) amidotransferase subunit C (99 aa).

Belongs to the GatC family. As to quaternary structure, heterotrimer of A, B and C subunits.

The enzyme catalyses L-glutamyl-tRNA(Gln) + L-glutamine + ATP + H2O = L-glutaminyl-tRNA(Gln) + L-glutamate + ADP + phosphate + H(+). It catalyses the reaction L-aspartyl-tRNA(Asn) + L-glutamine + ATP + H2O = L-asparaginyl-tRNA(Asn) + L-glutamate + ADP + phosphate + 2 H(+). Functionally, allows the formation of correctly charged Asn-tRNA(Asn) or Gln-tRNA(Gln) through the transamidation of misacylated Asp-tRNA(Asn) or Glu-tRNA(Gln) in organisms which lack either or both of asparaginyl-tRNA or glutaminyl-tRNA synthetases. The reaction takes place in the presence of glutamine and ATP through an activated phospho-Asp-tRNA(Asn) or phospho-Glu-tRNA(Gln). The protein is Aspartyl/glutamyl-tRNA(Asn/Gln) amidotransferase subunit C of Thermobifida fusca (strain YX).